A 117-amino-acid chain; its full sequence is Large ribosomal subunit protein bL19 (117 aa).

The protein belongs to the bacterial ribosomal protein bL19 family.

This protein is located at the 30S-50S ribosomal subunit interface and may play a role in the structure and function of the aminoacyl-tRNA binding site. This chain is Large ribosomal subunit protein bL19, found in Shewanella amazonensis (strain ATCC BAA-1098 / SB2B).